The chain runs to 56 residues: Male-specific sperm protein Mst87F (56 aa).

This sequence belongs to the MST(3)CGP family. Testis.

This chain is Male-specific sperm protein Mst87F (Mst87F), found in Drosophila melanogaster (Fruit fly).